A 468-amino-acid chain; its full sequence is Chromosomal replication initiator protein DnaA (468 aa).

The segment at 1–84 is domain I, interacts with DnaA modulators; that stretch reads MSSSLWLQCL…RFEVGSRRVA (84 aa). Positions 84-131 are domain II; it reads AAPKPAPTRTPADVAAESSAPAQLQARKPVHKTWDDDAQVIADINHRS. Residues 85–95 are compositionally biased toward low complexity; it reads APKPAPTRTPA. The tract at residues 85 to 104 is disordered; that stretch reads APKPAPTRTPADVAAESSAP. The interval 132–348 is domain III, AAA+ region; sequence NVNPKHKFNN…GALNRVIANA (217 aa). Gly176, Gly178, Lys179, and Thr180 together coordinate ATP. The interval 349–468 is domain IV, binds dsDNA; it reads NFTGRPITID…YSNLIRTLSS (120 aa).

This sequence belongs to the DnaA family. In terms of assembly, oligomerizes as a right-handed, spiral filament on DNA at oriC.

The protein localises to the cytoplasm. In terms of biological role, plays an essential role in the initiation and regulation of chromosomal replication. ATP-DnaA binds to the origin of replication (oriC) to initiate formation of the DNA replication initiation complex once per cell cycle. Binds the DnaA box (a 9 base pair repeat at the origin) and separates the double-stranded (ds)DNA. Forms a right-handed helical filament on oriC DNA; dsDNA binds to the exterior of the filament while single-stranded (ss)DNA is stabiized in the filament's interior. The ATP-DnaA-oriC complex binds and stabilizes one strand of the AT-rich DNA unwinding element (DUE), permitting loading of DNA polymerase. After initiation quickly degrades to an ADP-DnaA complex that is not apt for DNA replication. Binds acidic phospholipids. Complements a temperature-sensitive E.coli mutant, the DnaA consensus is 5'-TT(A/T)TNCACA-3'. The sequence is that of Chromosomal replication initiator protein DnaA from Vibrio harveyi (Beneckea harveyi).